Reading from the N-terminus, the 136-residue chain is uncharacterized protein (136 aa).

The protein localises to the mitochondrion. This is an uncharacterized protein from Arabidopsis thaliana (Mouse-ear cress).